A 39-amino-acid polypeptide reads, in one-letter code: Photosystem II reaction center protein L (39 aa).

The helical transmembrane segment at 18–38 (SLYLGLLIVFTTGILFSSYFF) threads the bilayer.

The protein belongs to the PsbL family. In terms of assembly, PSII is composed of 1 copy each of membrane proteins PsbA, PsbB, PsbC, PsbD, PsbE, PsbF, PsbH, PsbI, PsbJ, PsbK, PsbL, PsbM, PsbT, PsbX, PsbY, PsbZ, Psb30/Ycf12, peripheral proteins PsbO, CyanoQ (PsbQ), PsbU, PsbV and a large number of cofactors. It forms dimeric complexes.

It is found in the cellular thylakoid membrane. Functionally, one of the components of the core complex of photosystem II (PSII). PSII is a light-driven water:plastoquinone oxidoreductase that uses light energy to abstract electrons from H(2)O, generating O(2) and a proton gradient subsequently used for ATP formation. It consists of a core antenna complex that captures photons, and an electron transfer chain that converts photonic excitation into a charge separation. This subunit is found at the monomer-monomer interface and is required for correct PSII assembly and/or dimerization. The sequence is that of Photosystem II reaction center protein L from Synechococcus sp. (strain CC9311).